Here is a 107-residue protein sequence, read N- to C-terminus: Acidic phospholipase A2 braziliase-I (107 aa).

Disulfide bonds link Cys-26–Cys-100, Cys-28–Cys-44, Cys-43–Cys-86, Cys-49–Cys-107, Cys-50–Cys-79, Cys-57–Cys-72, and Cys-66–Cys-77. The Ca(2+) site is built by Tyr-27, Gly-29, and Gly-31. The active site involves His-47. A Ca(2+)-binding site is contributed by Asp-48. Asp-80 is an active-site residue.

Monomer. Requires Ca(2+) as cofactor. In terms of tissue distribution, expressed by the venom gland.

It is found in the secreted. The catalysed reaction is a 1,2-diacyl-sn-glycero-3-phosphocholine + H2O = a 1-acyl-sn-glycero-3-phosphocholine + a fatty acid + H(+). Snake venom phospholipase A2 (PLA2) that induces significant edematogenic activity. Shows mild cytotoxicity on Trypanosoma cruzi and Leishmania infantum. Also inhibits ADP- and collagen-induced platelet aggregation. Does not show myotoxic activity. This chain is Acidic phospholipase A2 braziliase-I, found in Bothrops brazili (Brazil's lancehead).